The following is a 359-amino-acid chain: UDP-3-O-acylglucosamine N-acyltransferase (359 aa).

His-256 functions as the Proton acceptor in the catalytic mechanism.

It belongs to the transferase hexapeptide repeat family. LpxD subfamily. In terms of assembly, homotrimer.

The catalysed reaction is a UDP-3-O-[(3R)-3-hydroxyacyl]-alpha-D-glucosamine + a (3R)-hydroxyacyl-[ACP] = a UDP-2-N,3-O-bis[(3R)-3-hydroxyacyl]-alpha-D-glucosamine + holo-[ACP] + H(+). It functions in the pathway bacterial outer membrane biogenesis; LPS lipid A biosynthesis. Its function is as follows. Catalyzes the N-acylation of UDP-3-O-acylglucosamine using 3-hydroxyacyl-ACP as the acyl donor. Is involved in the biosynthesis of lipid A, a phosphorylated glycolipid that anchors the lipopolysaccharide to the outer membrane of the cell. This is UDP-3-O-acylglucosamine N-acyltransferase from Rhodopseudomonas palustris (strain BisB5).